The primary structure comprises 793 residues: Wall-associated receptor kinase-like 18 (793 aa).

The N-terminal stretch at Met-1–Ala-28 is a signal peptide. The Extracellular segment spans residues Cys-29 to Ala-378. N-linked (GlcNAc...) asparagine glycosylation is found at Asn-60, Asn-130, Asn-170, Asn-238, Asn-285, and Asn-304. Residues Cys-312–Cys-371 are atypical EGF-like. 3 cysteine pairs are disulfide-bonded: Cys-314-Cys-327, Cys-349-Cys-362, and Cys-356-Cys-371. A helical membrane pass occupies residues Ile-379–Leu-399. At Arg-400–Trp-793 the chain is on the cytoplasmic side. The Protein kinase domain maps to Phe-453–Ile-728. Residues Leu-459 to Val-467 and Lys-481 contribute to the ATP site. Phosphotyrosine is present on Tyr-526. Asp-579 acts as the Proton acceptor in catalysis. Phosphothreonine is present on residues Thr-613 and Thr-618. Tyr-626 bears the Phosphotyrosine mark. The disordered stretch occupies residues Glu-733–Thr-757. Residues Asp-742 to Val-754 are compositionally biased toward acidic residues.

This sequence belongs to the protein kinase superfamily. Ser/Thr protein kinase family.

The protein resides in the membrane. It carries out the reaction L-seryl-[protein] + ATP = O-phospho-L-seryl-[protein] + ADP + H(+). The enzyme catalyses L-threonyl-[protein] + ATP = O-phospho-L-threonyl-[protein] + ADP + H(+). In terms of biological role, serine/threonine-protein kinase that may function as a signaling receptor of extracellular matrix component. The protein is Wall-associated receptor kinase-like 18 (WAKL18) of Arabidopsis thaliana (Mouse-ear cress).